The sequence spans 72 residues: DNA-directed RNA polymerase subunit omega (72 aa).

It belongs to the RNA polymerase subunit omega family. As to quaternary structure, the RNAP catalytic core consists of 2 alpha, 1 beta, 1 beta' and 1 omega subunit. When a sigma factor is associated with the core the holoenzyme is formed, which can initiate transcription.

It carries out the reaction RNA(n) + a ribonucleoside 5'-triphosphate = RNA(n+1) + diphosphate. Functionally, promotes RNA polymerase assembly. Latches the N- and C-terminal regions of the beta' subunit thereby facilitating its interaction with the beta and alpha subunits. This Lactobacillus johnsonii (strain CNCM I-12250 / La1 / NCC 533) protein is DNA-directed RNA polymerase subunit omega.